The primary structure comprises 263 residues: Thiazole synthase (263 aa).

Lys-100 functions as the Schiff-base intermediate with DXP in the catalytic mechanism. Residues Gly-161, 188-189 (AG), and 210-211 (NS) contribute to the 1-deoxy-D-xylulose 5-phosphate site.

This sequence belongs to the ThiG family. Homotetramer. Forms heterodimers with either ThiH or ThiS.

The protein localises to the cytoplasm. The enzyme catalyses [ThiS sulfur-carrier protein]-C-terminal-Gly-aminoethanethioate + 2-iminoacetate + 1-deoxy-D-xylulose 5-phosphate = [ThiS sulfur-carrier protein]-C-terminal Gly-Gly + 2-[(2R,5Z)-2-carboxy-4-methylthiazol-5(2H)-ylidene]ethyl phosphate + 2 H2O + H(+). It functions in the pathway cofactor biosynthesis; thiamine diphosphate biosynthesis. Functionally, catalyzes the rearrangement of 1-deoxy-D-xylulose 5-phosphate (DXP) to produce the thiazole phosphate moiety of thiamine. Sulfur is provided by the thiocarboxylate moiety of the carrier protein ThiS. In vitro, sulfur can be provided by H(2)S. This is Thiazole synthase from Pseudoalteromonas translucida (strain TAC 125).